Reading from the N-terminus, the 945-residue chain is Endo-1,4-beta-xylanase 1 (945 aa).

Basic and acidic residues predominate over residues 16 to 41 (NGDRNPDKKSRESMEVSRKDNEEPEK). A disordered region spans residues 16-50 (NGDRNPDKKSRESMEVSRKDNEEPEKQNNNNVASI). CBM-cenC domains follow at residues 57–197 (NVIV…EGPS), 227–362 (IVVN…IEGP), and 397–541 (NILT…GPSS). Residues asparagine 86, asparagine 239, asparagine 305, asparagine 349, asparagine 417, asparagine 453, and asparagine 687 are each glycosylated (N-linked (GlcNAc...) asparagine). The 296-residue stretch at 589–884 (SGASVRVRQI…NEAGKRFLAV (296 aa)) folds into the GH10 domain. Glutamate 718 functions as the Proton donor in the catalytic mechanism. Glutamate 819 (nucleophile) is an active-site residue.

This sequence belongs to the glycosyl hydrolase 10 (cellulase F) family. Predominantly expressed in vascular bundles, but not in vessel cells. Mostly expressed in stems, at lower levels in roots, and weakly in inflorescences and seedlings.

It is found in the secreted. The protein resides in the cell wall. It catalyses the reaction Endohydrolysis of (1-&gt;4)-beta-D-xylosidic linkages in xylans.. It functions in the pathway glycan degradation; xylan degradation. Binds to and hydrolyzes insoluble and soluble xylan substrates. Exhibits xylanase activity. The polypeptide is Endo-1,4-beta-xylanase 1 (Arabidopsis thaliana (Mouse-ear cress)).